Here is a 149-residue protein sequence, read N- to C-terminus: Large ribosomal subunit protein uL13 (149 aa).

It belongs to the universal ribosomal protein uL13 family. In terms of assembly, part of the 50S ribosomal subunit.

Its function is as follows. This protein is one of the early assembly proteins of the 50S ribosomal subunit, although it is not seen to bind rRNA by itself. It is important during the early stages of 50S assembly. This is Large ribosomal subunit protein uL13 from Pelodictyon phaeoclathratiforme (strain DSM 5477 / BU-1).